The sequence spans 144 residues: Mediator of RNA polymerase II transcription subunit 21 (144 aa).

Belongs to the Mediator complex subunit 21 family. Component of the Mediator complex, which is composed of MED1, MED4, MED6, MED7, MED8, MED9, MED10, MED11, MED12, MED13, MED13L, MED14, MED15, MED16, MED17, MED18, MED19, MED20, MED21, MED22, MED23, MED24, MED25, MED26, MED27, MED29, MED30, MED31, CCNC, CDK8 and CDC2L6/CDK11. The MED12, MED13, CCNC and CDK8 subunits form a distinct module termed the CDK8 module. Mediator containing the CDK8 module is less active than Mediator lacking this module in supporting transcriptional activation. Individual preparations of the Mediator complex lacking one or more distinct subunits have been variously termed ARC, CRSP, DRIP, PC2, SMCC and TRAP. Interacts with PPARG. Interacts with THRA in a ligand-dependent fashion.

It localises to the nucleus. Functionally, component of the Mediator complex, a coactivator involved in the regulated transcription of nearly all RNA polymerase II-dependent genes. Mediator functions as a bridge to convey information from gene-specific regulatory proteins to the basal RNA polymerase II transcription machinery. Mediator is recruited to promoters by direct interactions with regulatory proteins and serves as a scaffold for the assembly of a functional preinitiation complex with RNA polymerase II and the general transcription factors. This is Mediator of RNA polymerase II transcription subunit 21 (MED21) from Pongo abelii (Sumatran orangutan).